The chain runs to 245 residues: Aliphatic sulfonates import ATP-binding protein SsuB 1 (245 aa).

The region spanning 9–227 is the ABC transporter domain; that stretch reads LDLVGIGHRY…HRGDAQLAAW (219 aa). 41–48 contributes to the ATP binding site; sequence GPSGVGKS.

The protein belongs to the ABC transporter superfamily. Aliphatic sulfonates importer (TC 3.A.1.17.2) family. In terms of assembly, the complex is composed of two ATP-binding proteins (SsuB), two transmembrane proteins (SsuC) and a solute-binding protein (SsuA).

The protein resides in the cell membrane. It catalyses the reaction ATP + H2O + aliphatic sulfonate-[sulfonate-binding protein]Side 1 = ADP + phosphate + aliphatic sulfonateSide 2 + [sulfonate-binding protein]Side 1.. In terms of biological role, part of the ABC transporter complex SsuABC involved in aliphatic sulfonates import. Responsible for energy coupling to the transport system. In Rhodococcus jostii (strain RHA1), this protein is Aliphatic sulfonates import ATP-binding protein SsuB 1.